Here is a 479-residue protein sequence, read N- to C-terminus: ATP synthase subunit beta (479 aa).

ATP is bound at residue 158–165 (GGAGLGKT).

Belongs to the ATPase alpha/beta chains family. F-type ATPases have 2 components, CF(1) - the catalytic core - and CF(0) - the membrane proton channel. CF(1) has five subunits: alpha(3), beta(3), gamma(1), delta(1), epsilon(1). CF(0) has three main subunits: a(1), b(2) and c(9-12). The alpha and beta chains form an alternating ring which encloses part of the gamma chain. CF(1) is attached to CF(0) by a central stalk formed by the gamma and epsilon chains, while a peripheral stalk is formed by the delta and b chains.

It localises to the cell inner membrane. It carries out the reaction ATP + H2O + 4 H(+)(in) = ADP + phosphate + 5 H(+)(out). Functionally, produces ATP from ADP in the presence of a proton gradient across the membrane. The catalytic sites are hosted primarily by the beta subunits. The polypeptide is ATP synthase subunit beta (Rhodopirellula baltica (strain DSM 10527 / NCIMB 13988 / SH1)).